A 206-amino-acid polypeptide reads, in one-letter code: Large ribosomal subunit protein uL4 (206 aa).

The tract at residues 43-78 is disordered; sequence ARSGNRKQKDREEVKHTTKKPWRQKGTGRARAGMSS. A compositionally biased stretch (basic and acidic residues) spans 49–58; it reads KQKDREEVKH. A compositionally biased stretch (basic residues) spans 59-70; it reads TTKKPWRQKGTG.

This sequence belongs to the universal ribosomal protein uL4 family. As to quaternary structure, part of the 50S ribosomal subunit.

Its function is as follows. One of the primary rRNA binding proteins, this protein initially binds near the 5'-end of the 23S rRNA. It is important during the early stages of 50S assembly. It makes multiple contacts with different domains of the 23S rRNA in the assembled 50S subunit and ribosome. Forms part of the polypeptide exit tunnel. The polypeptide is Large ribosomal subunit protein uL4 (Cupriavidus pinatubonensis (strain JMP 134 / LMG 1197) (Cupriavidus necator (strain JMP 134))).